A 92-amino-acid polypeptide reads, in one-letter code: Large ribosomal subunit protein bL25 (92 aa).

The protein belongs to the bacterial ribosomal protein bL25 family. Part of the 50S ribosomal subunit; part of the 5S rRNA/L5/L18/L25 subcomplex. Contacts the 5S rRNA. Binds to the 5S rRNA independently of L5 and L18.

Its function is as follows. This is one of the proteins that binds to the 5S RNA in the ribosome where it forms part of the central protuberance. The chain is Large ribosomal subunit protein bL25 from Vibrio atlanticus (strain LGP32) (Vibrio splendidus (strain Mel32)).